The following is a 574-amino-acid chain: 4-oxocyclohexanecarboxylate 2-dehydrogenase (574 aa).

It belongs to the FAD-dependent oxidoreductase 2 family. In terms of assembly, monomer. Homodimer. It depends on FAD as a cofactor.

It catalyses the reaction 4-oxocyclohexane-1-carboxylate + O2 = 4-oxocyclohex-2-ene-1-carboxylate + H2O2. Its activity is regulated as follows. Inhibited by 5,5'-dithio-bis(2- nitrobenzoate) and N-bromosuccinimide, but not by thiol and chelating reagents. Desaturase involved in a cyclohexanecarboxylate (CHCA) degradation pathway. Catalyzes the conversion of 4-oxocyclohexanecarboxylate (4-oxoCHCA) to 4-oxocyclohexenecarboxylate. Is highly specific for 4-oxocyclohexanecarboxylic acid and shows only slight activity with 4-oxo-2-methylcyclohex-2-enecarboxylic acid. In Sinomonas cyclohexanicum (Corynebacterium cyclohexanicum), this protein is 4-oxocyclohexanecarboxylate 2-dehydrogenase.